A 350-amino-acid chain; its full sequence is UDP-3-O-acylglucosamine N-acyltransferase (350 aa).

Catalysis depends on histidine 251, which acts as the Proton acceptor.

Belongs to the transferase hexapeptide repeat family. LpxD subfamily. As to quaternary structure, homotrimer.

It carries out the reaction a UDP-3-O-[(3R)-3-hydroxyacyl]-alpha-D-glucosamine + a (3R)-hydroxyacyl-[ACP] = a UDP-2-N,3-O-bis[(3R)-3-hydroxyacyl]-alpha-D-glucosamine + holo-[ACP] + H(+). It functions in the pathway bacterial outer membrane biogenesis; LPS lipid A biosynthesis. In terms of biological role, catalyzes the N-acylation of UDP-3-O-acylglucosamine using 3-hydroxyacyl-ACP as the acyl donor. Is involved in the biosynthesis of lipid A, a phosphorylated glycolipid that anchors the lipopolysaccharide to the outer membrane of the cell. This chain is UDP-3-O-acylglucosamine N-acyltransferase, found in Prochlorococcus marinus (strain NATL2A).